The sequence spans 417 residues: NADH-quinone oxidoreductase subunit D (417 aa).

This sequence belongs to the complex I 49 kDa subunit family. As to quaternary structure, NDH-1 is composed of 14 different subunits. Subunits NuoB, C, D, E, F, and G constitute the peripheral sector of the complex.

The protein resides in the cell inner membrane. The catalysed reaction is a quinone + NADH + 5 H(+)(in) = a quinol + NAD(+) + 4 H(+)(out). In terms of biological role, NDH-1 shuttles electrons from NADH, via FMN and iron-sulfur (Fe-S) centers, to quinones in the respiratory chain. The immediate electron acceptor for the enzyme in this species is believed to be ubiquinone. Couples the redox reaction to proton translocation (for every two electrons transferred, four hydrogen ions are translocated across the cytoplasmic membrane), and thus conserves the redox energy in a proton gradient. This Hydrogenovibrio crunogenus (strain DSM 25203 / XCL-2) (Thiomicrospira crunogena) protein is NADH-quinone oxidoreductase subunit D.